Consider the following 198-residue polypeptide: FMN-dependent NADH:quinone oxidoreductase (198 aa).

Residue 92–95 (MWNL) coordinates FMN.

This sequence belongs to the azoreductase type 1 family. In terms of assembly, homodimer. FMN serves as cofactor.

It carries out the reaction 2 a quinone + NADH + H(+) = 2 a 1,4-benzosemiquinone + NAD(+). The enzyme catalyses N,N-dimethyl-1,4-phenylenediamine + anthranilate + 2 NAD(+) = 2-(4-dimethylaminophenyl)diazenylbenzoate + 2 NADH + 2 H(+). Functionally, quinone reductase that provides resistance to thiol-specific stress caused by electrophilic quinones. Also exhibits azoreductase activity. Catalyzes the reductive cleavage of the azo bond in aromatic azo compounds to the corresponding amines. This Clostridium beijerinckii (strain ATCC 51743 / NCIMB 8052) (Clostridium acetobutylicum) protein is FMN-dependent NADH:quinone oxidoreductase.